A 20-amino-acid chain; its full sequence is DGCPPHPVPGMHPCMCTNTC.

Intrachain disulfides connect Cys-3-Cys-16 and Cys-14-Cys-20.

Expressed by the venom duct.

It localises to the secreted. Alpha-conotoxins act on postsynaptic membranes, they bind to the nicotinic acetylcholine receptors (nAChR) and thus inhibit them. This is Alpha-conotoxin-like ts14a from Conus tessulatus (Tessellate cone).